A 497-amino-acid chain; its full sequence is Glutathione hydrolase 6 (497 aa).

Positions 1–34 (MDATTGPVHYHKLQLWEPGVESEEEEEEEEEEIA) are disordered. Residues 1 to 51 (MDATTGPVHYHKLQLWEPGVESEEEEEEEEEEIAEPLVLSLRRLQNTPRNE) lie on the Cytoplasmic side of the membrane. Residues 20-34 (VESEEEEEEEEEEIA) show a composition bias toward acidic residues. A helical; Signal-anchor for type II membrane protein transmembrane segment spans residues 52–72 (VGGLPGAWARLLAGLLLLAVS). The Extracellular portion of the chain corresponds to 73 to 497 (SSLALRQLHS…PSGCCPFQGY (425 aa)). Asn-164, Asn-169, Asn-367, and Asn-378 each carry an N-linked (GlcNAc...) asparagine glycan.

Belongs to the gamma-glutamyltransferase family. In terms of assembly, heterodimer composed of the light and heavy chains. The active site is located in the light chain. Cleaved by autocatalysis into a large and a small subunit and the autocatalytic cleavage is essential to the functional activation of the enzyme.

It localises to the membrane. The catalysed reaction is an N-terminal (5-L-glutamyl)-[peptide] + an alpha-amino acid = 5-L-glutamyl amino acid + an N-terminal L-alpha-aminoacyl-[peptide]. It carries out the reaction glutathione + H2O = L-cysteinylglycine + L-glutamate. It catalyses the reaction an S-substituted glutathione + H2O = an S-substituted L-cysteinylglycine + L-glutamate. It participates in sulfur metabolism; glutathione metabolism. Its function is as follows. Hydrolyzes and transfers gamma-glutamyl moieties from glutathione and other gamma-glutamyl compounds to acceptors. The polypeptide is Glutathione hydrolase 6 (Mus musculus (Mouse)).